Here is a 241-residue protein sequence, read N- to C-terminus: MLSSVAAYSGAGRDLAMEPHSSVGPLQLRFSPYAFNGGTVLAIAGEDFSIVASDTRLSEGFSIHTRDSPKCYKLTDKTVIGCSGFHGDCLTLTKIIEARLKMYKHSNNKAMTTGAIAAMLSTILYSRRFFPYYVYNIIGGLDEEGKGAVYSFDPVGSYQRDSFKAGGSASAMLQPLLDNQVGFKNMQNVEHVPLSLDRAMRLVKDVFISAAERDVYTGDALKVCIVTKEGIRGETVPLRKD.

Met1 carries the post-translational modification N-acetylmethionine. Residues 1–28 constitute a propeptide that is removed on maturation; that stretch reads MLSSVAAYSGAGRDLAMEPHSSVGPLQL. Ser58 carries an O-linked (GlcNAc) serine glycan. A phosphoserine mark is found at Ser62 and Ser68. Tyr150 carries the phosphotyrosine modification. Phosphoserine is present on Ser162. Position 204 is an N6-acetyllysine (Lys204). Ser209 carries an O-linked (GlcNAc) serine glycan.

The protein belongs to the peptidase T1B family. As to quaternary structure, the 26S proteasome consists of a 20S proteasome core and two 19S regulatory subunits. The 20S proteasome core is a barrel-shaped complex made of 28 subunits that are arranged in four stacked rings. The two outer rings are each formed by seven alpha subunits, and the two inner rings are formed by seven beta subunits. The proteolytic activity is exerted by three beta-subunits PSMB5, PSMB6 and PSMB7. Interacts with SERPINB2. Interacts with RFPL4A.

The protein resides in the cytoplasm. Its subcellular location is the nucleus. Its function is as follows. Non-catalytic component of the 20S core proteasome complex involved in the proteolytic degradation of most intracellular proteins. This complex plays numerous essential roles within the cell by associating with different regulatory particles. Associated with two 19S regulatory particles, forms the 26S proteasome and thus participates in the ATP-dependent degradation of ubiquitinated proteins. The 26S proteasome plays a key role in the maintenance of protein homeostasis by removing misfolded or damaged proteins that could impair cellular functions, and by removing proteins whose functions are no longer required. Associated with the PA200 or PA28, the 20S proteasome mediates ubiquitin-independent protein degradation. This type of proteolysis is required in several pathways including spermatogenesis (20S-PA200 complex) or generation of a subset of MHC class I-presented antigenic peptides (20S-PA28 complex). The sequence is that of Proteasome subunit beta type-1 (PSMB1) from Bos taurus (Bovine).